Reading from the N-terminus, the 643-residue chain is Phosphatidylinositol-3,5-bisphosphate 3-phosphatase MTMR2 (643 aa).

The disordered stretch occupies residues 1–52 (MEKSSSCESLGAQLPAARLPSEDSLSSASTSHSENSVHTKSASAISSDSIST). 2 positions are modified to phosphoserine: Ser6 and Ser9. Over residues 23–40 (DSLSSASTSHSENSVHTK) the composition is skewed to polar residues. Residues 41–52 (SASAISSDSIST) show a composition bias toward low complexity. At Ser58 the chain carries Phosphoserine. A GRAM domain is found at 68–139 (NKLAEMEEPA…GVISRVEKIG (72 aa)). One can recognise a Myotubularin phosphatase domain in the interval 205-580 (GWKLYDPLLE…RHLELWVGYY (376 aa)). 3 residues coordinate a 1,2-diacyl-sn-glycero-3-phospho-(1D-myo-inositol-3,5-bisphosphate): Asn330, Asn355, and Ile356. Asn330, Asn355, and Ile356 together coordinate a 1,2-diacyl-sn-glycero-3-phospho-(1D-myo-inositol-3-phosphate). The Phosphocysteine intermediate role is filled by Cys417. A 1,2-diacyl-sn-glycero-3-phospho-(1D-myo-inositol-3,5-bisphosphate) contacts are provided by Ser418, Asp419, Gly420, Trp421, Asp422, Arg423, Arg459, and Arg463. Residues Ser418, Asp419, Gly420, Trp421, Asp422, and Arg423 each contribute to the a 1,2-diacyl-sn-glycero-3-phospho-(1D-myo-inositol-3-phosphate) site. Arg463 contributes to the a 1,2-diacyl-sn-glycero-3-phospho-(1D-myo-inositol-3-phosphate) binding site. Residues 593–627 (IHSRYKELLAKRAELQRKVEELQREISNRSTSSSE) adopt a coiled-coil conformation. The tract at residues 614–643 (LQREISNRSTSSSERASSPAQCVTPVQTVV) is disordered. Residues 620–631 (NRSTSSSERASS) show a composition bias toward low complexity. The segment covering 632–643 (PAQCVTPVQTVV) has biased composition (polar residues).

It belongs to the protein-tyrosine phosphatase family. Non-receptor class myotubularin subfamily. Homodimer (via coiled-coil domain). Heterotetramer consisting of one MTMR2 dimer and one SBF2/MTMR13 dimer; specifically in peripheral nerves stabilizes SBF2/MTMR13 at the membranes and increases MTMR2 catalytic activity towards phosphatidylinositol 3,5-bisphosphate and to a lesser extent towards phosphatidylinositol 3-phosphate. Heterodimer with SBF1/MTMR5; acts as an adapter for the phosphatase MTMR2 to regulate MTMR2 catalytic activity and subcellular location. Heterodimer with MTMR12. Phosphorylation at Ser-58 decreases MTMR2 localization to endocytic vesicular structures. In terms of tissue distribution, expressed in sciatic nerve and in Schwann cells (at protein level). Detected in adult dorsal root ganglia, neurons of the central nervous system, motor neurons, cell soma and neurites of sensory neurons, olfactory bulb, cerebellum and hippocampus.

Its subcellular location is the cytoplasm. The protein resides in the early endosome membrane. It is found in the perinuclear region. It localises to the cell projection. The protein localises to the axon. Its subcellular location is the endosome membrane. It catalyses the reaction a 1,2-diacyl-sn-glycero-3-phospho-(1D-myo-inositol-3,5-bisphosphate) + H2O = a 1,2-diacyl-sn-glycero-3-phospho-(1D-myo-inositol-5-phosphate) + phosphate. It carries out the reaction a 1,2-diacyl-sn-glycero-3-phospho-(1D-myo-inositol-3-phosphate) + H2O = a 1,2-diacyl-sn-glycero-3-phospho-(1D-myo-inositol) + phosphate. The enzyme catalyses 1,2-dioctanoyl-sn-glycero-3-phospho-(1-D-myo-inositol-3-phosphate) + H2O = 1,2-dioctanoyl-sn-glycero-3-phospho-(1D-myo-inositol) + phosphate. The catalysed reaction is 1,2-dioctanoyl-sn-glycero-3-phospho-(1D-myo-inositol-3,5-bisphosphate) + H2O = 1,2-dioctanoyl-sn-glycero-3-phospho-(1D-myo-inositol-5-phosphate) + phosphate. Functionally, lipid phosphatase that specifically dephosphorylates the D-3 position of phosphatidylinositol 3-phosphate and phosphatidylinositol 3,5-bisphosphate, generating phosphatidylinositol and phosphatidylinositol 5-phosphate. Regulates the level of these phosphoinositides critical for various biological processes including autophagy initiation and autophagosome maturation. The sequence is that of Phosphatidylinositol-3,5-bisphosphate 3-phosphatase MTMR2 from Mus musculus (Mouse).